Reading from the N-terminus, the 381-residue chain is Subtilisin amylosacchariticus (381 aa).

The N-terminal stretch at 1-29 (MRSKKLWISLLFALTLIFTMAFSNMSAQA) is a signal peptide. The propeptide occupies 30 to 106 (AGKSSTEKKY…VEEDHIAHEY (77 aa)). Residues 38-103 (KYIVGFKQTM…VAYVEEDHIA (66 aa)) form the Inhibitor I9 domain. Glutamine 108 is a Ca(2+) binding site. In terms of domain architecture, Peptidase S8 spans 111–380 (PYGISQIKAP…KGLINVQAAA (270 aa)). Catalysis depends on aspartate 138, which acts as the Charge relay system. Aspartate 147 contributes to the Ca(2+) binding site. Catalysis depends on histidine 170, which acts as the Charge relay system. Leucine 181, asparagine 183, isoleucine 185, valine 187, alanine 275, tyrosine 277, and threonine 280 together coordinate Ca(2+). Serine 327 serves as the catalytic Charge relay system.

It belongs to the peptidase S8 family. It depends on Ca(2+) as a cofactor.

The protein localises to the secreted. It carries out the reaction Hydrolysis of proteins with broad specificity for peptide bonds, and a preference for a large uncharged residue in P1. Hydrolyzes peptide amides.. Subtilisin is an extracellular alkaline serine protease, it catalyzes the hydrolysis of proteins and peptide amides. This chain is Subtilisin amylosacchariticus (apr), found in Bacillus subtilis subsp. amylosacchariticus.